The following is a 1066-amino-acid chain: Elongation factor 3 (1066 aa).

HEAT repeat units lie at residues phenylalanine 112–proline 149, alanine 151–glutamate 188, alanine 192–asparagine 229, aspartate 231–serine 268, alanine 269–asparagine 306, and proline 312–aspartate 353. Threonine 418 serves as a coordination point for ADP. ABC transporter domains follow at residues glutamate 454–leucine 672 and isoleucine 699–glutamate 1015. 4 residues coordinate ADP: asparagine 735, glutamate 944, asparagine 947, and histidine 973. Residues glycine 997–leucine 1066 are disordered. Positions arginine 1042–alanine 1054 are enriched in basic residues.

Belongs to the ABC transporter superfamily. ABCF family. EF3 subfamily.

The protein localises to the cytoplasm. It is found in the cytosol. It catalyses the reaction ATP + H2O = ADP + phosphate + H(+). It functions in the pathway protein biosynthesis; polypeptide chain elongation. Functionally, ribosome-dependent ATPase that functions in cytoplasmic translation elongation. Required for the ATP-dependent release of deacylated tRNA from the ribosomal E-site during protein biosynthesis. Stimulates the eEF1A-dependent binding of aminoacyl-tRNA to the ribosomal A-site, which has reduced affinity for tRNA as long as the E-site is occupied. Assists translation termination by stimulating the release of nascent protein from the ribosome by release factors. The protein is Elongation factor 3 of Mycosarcoma maydis (Corn smut fungus).